The following is a 380-amino-acid chain: Anhydro-N-acetylmuramic acid kinase (380 aa).

9-16 (GTSVDGID) contacts ATP.

The protein belongs to the anhydro-N-acetylmuramic acid kinase family.

The catalysed reaction is 1,6-anhydro-N-acetyl-beta-muramate + ATP + H2O = N-acetyl-D-muramate 6-phosphate + ADP + H(+). The protein operates within amino-sugar metabolism; 1,6-anhydro-N-acetylmuramate degradation. Its pathway is cell wall biogenesis; peptidoglycan recycling. In terms of biological role, catalyzes the specific phosphorylation of 1,6-anhydro-N-acetylmuramic acid (anhMurNAc) with the simultaneous cleavage of the 1,6-anhydro ring, generating MurNAc-6-P. Is required for the utilization of anhMurNAc either imported from the medium or derived from its own cell wall murein, and thus plays a role in cell wall recycling. The chain is Anhydro-N-acetylmuramic acid kinase from Cyanothece sp. (strain PCC 7425 / ATCC 29141).